The sequence spans 174 residues: FMN reductase (NADH) SmoA (174 aa).

The protein belongs to the non-flavoprotein flavin reductase family.

The catalysed reaction is FMNH2 + NAD(+) = FMN + NADH + 2 H(+). In terms of biological role, part of the sulfoquinovose monooxygenase (sulfo-SMO) pathway, a D-sulfoquinovose degradation pathway that enables the complete utilization of all carbons within sulfoquinovose (SQ) with concomitant production of inorganic sulfite. Catalyzes the NADH-dependent reduction of FMN. FMNH(2) is then transferred to the sulfoquinovose monooxygenase SmoC. This is FMN reductase (NADH) SmoA from Agrobacterium fabrum (strain C58 / ATCC 33970) (Agrobacterium tumefaciens (strain C58)).